The sequence spans 148 residues: UPF0178 protein CA_C2825 (148 aa).

The protein belongs to the UPF0178 family.

This chain is UPF0178 protein CA_C2825, found in Clostridium acetobutylicum (strain ATCC 824 / DSM 792 / JCM 1419 / IAM 19013 / LMG 5710 / NBRC 13948 / NRRL B-527 / VKM B-1787 / 2291 / W).